A 189-amino-acid polypeptide reads, in one-letter code: uncharacterized protein (189 aa).

Residues 1 to 19 (MNKLTILFLILALISVIYA) form the signal peptide. The interval 24–189 (PSSSEDSSSN…GSGSSGTVYY (166 aa)) is disordered. Positions 25–69 (SSSEDSSSNDSNSQVTGSQSYSGSQSDSNSGSESHTINTGSSYSG) are enriched in low complexity. Residues 70–101 (SGSGSSGISGGSGSGSGSGSGSGSGSGSGSGA) are compositionally biased toward gly residues. Low complexity predominate over residues 102–142 (VSGSQSGSGAVSGSQSGSGAVSGSQSGVQTGSQSGAGSASG). The segment covering 144–157 (FTGNPSGSQSQEIN) has biased composition (polar residues). Residues 165–183 (SGSGAPTGAATGSGSGSGS) are compositionally biased toward gly residues.

This is an uncharacterized protein from Dictyostelium discoideum (Social amoeba).